We begin with the raw amino-acid sequence, 544 residues long: Phenylalanine--tRNA ligase beta subunit (544 aa).

The region spanning 268–343 (LIHKIQNVRE…MSIGYNNLEP (76 aa)) is the B5 domain. Aspartate 321, aspartate 327, glutamate 330, and aspartate 331 together coordinate Mg(2+).

Belongs to the phenylalanyl-tRNA synthetase beta subunit family. Type 2 subfamily. In terms of assembly, tetramer of two alpha and two beta subunits. Requires Mg(2+) as cofactor.

Its subcellular location is the cytoplasm. It catalyses the reaction tRNA(Phe) + L-phenylalanine + ATP = L-phenylalanyl-tRNA(Phe) + AMP + diphosphate + H(+). In Saccharolobus solfataricus (strain ATCC 35092 / DSM 1617 / JCM 11322 / P2) (Sulfolobus solfataricus), this protein is Phenylalanine--tRNA ligase beta subunit.